The following is a 310-amino-acid chain: Putative carbonic anhydrase 5 (310 aa).

Positions 1-20 are cleaved as a signal peptide; it reads MPSHLLVLSLLVALLVVVSC. An Alpha-carbonic anhydrase domain is found at 26–280; sequence HGWGYDENNG…LNGRRIQYRP (255 aa). 3 residues coordinate Zn(2+): His117, His119, and His142. 223–224 serves as a coordination point for substrate; that stretch reads TT.

It belongs to the alpha-carbonic anhydrase family.

Its subcellular location is the secreted. It carries out the reaction hydrogencarbonate + H(+) = CO2 + H2O. Its function is as follows. Reversible hydration of carbon dioxide. This chain is Putative carbonic anhydrase 5 (cah-5), found in Caenorhabditis elegans.